A 404-amino-acid chain; its full sequence is MHC class I-like protein MILL1 (404 aa).

The signal sequence occupies residues 1 to 30 (MMLSRDLRAEAAVRLWIMFLLLEDLLGACA). Residues 59 to 150 (EVAGPHTLRY…VTGQKGQDKG (92 aa)) are alpha-1. Asn98, Asn102, and Asn165 each carry an N-linked (GlcNAc...) asparagine glycan. Positions 151–242 (LHILQATLGC…SLRSEPLDTG (92 aa)) are alpha-2. Cystine bridges form between Cys160–Cys223 and Cys262–Cys322. An Ig-like C1-type domain is found at 224 to 338 (PAQLQRHLAS…GNIEKRAVIV (115 aa)). Residues 243–342 (SPMVIVTFRN…KRAVIVNTVS (100 aa)) form an alpha-3 region. Asn323 is a glycosylation site (N-linked (GlcNAc...) asparagine). Residues 343-373 (GEKTRQPSTSGVGGRVKKSLWTTMTTAFMVT) form a connecting peptide region. The GPI-anchor amidated serine moiety is linked to residue Ser374. Positions 375 to 404 (WTRKTGGDSTLLLLWWLLFFSTVLAVLTLV) are cleaved as a propeptide — removed in mature form.

This sequence belongs to the MHC class I family. Heterodimer with B2M. In terms of tissue distribution, detected in skin, esophagus, tongue, skin, muscle, uterus, ovary, testis and epididymis.

The protein resides in the cell membrane. The sequence is that of MHC class I-like protein MILL1 from Rattus norvegicus (Rat).